We begin with the raw amino-acid sequence, 225 residues long: Uracil-DNA glycosylase (225 aa).

The Proton acceptor role is filled by D65.

This sequence belongs to the uracil-DNA glycosylase (UDG) superfamily. UNG family.

It is found in the cytoplasm. The catalysed reaction is Hydrolyzes single-stranded DNA or mismatched double-stranded DNA and polynucleotides, releasing free uracil.. Excises uracil residues from the DNA which can arise as a result of misincorporation of dUMP residues by DNA polymerase or due to deamination of cytosine. The chain is Uracil-DNA glycosylase from Bacillus cereus (strain ATCC 10987 / NRS 248).